The chain runs to 240 residues: Sugar fermentation stimulation protein homolog (240 aa).

This sequence belongs to the SfsA family.

The polypeptide is Sugar fermentation stimulation protein homolog (Natranaerobius thermophilus (strain ATCC BAA-1301 / DSM 18059 / JW/NM-WN-LF)).